A 136-amino-acid chain; its full sequence is Histone H3.2 (136 aa).

The disordered stretch occupies residues 1–43 (MARTKQTARKSTGGKAPRKQLATKAARKSAPATGGVKKPHRFR). The residue at position 5 (K5) is an N6-methylated lysine. Residue K10 is modified to N6-acetyllysine; alternate. N6-methylated lysine; alternate is present on K10. The residue at position 11 (S11) is a Phosphoserine. At T12 the chain carries Phosphothreonine. Position 15 is an N6-acetyllysine (K15). 2 positions are modified to N6-acetyllysine; alternate: K19 and K24. N6-methylated lysine; alternate occurs at positions 19 and 24. K28 bears the N6-methylated lysine mark. S29 bears the Phosphoserine mark. K37 is subject to N6-methylated lysine.

It belongs to the histone H3 family. As to quaternary structure, the nucleosome is a histone octamer containing two molecules each of H2A, H2B, H3 and H4 assembled in one H3-H4 heterotetramer and two H2A-H2B heterodimers. The octamer wraps approximately 147 bp of DNA. In terms of processing, acetylation is generally linked to gene activation. Can be acetylated to form H3K9ac, H3K14ac, H3K18ac and H3K23ac. H3K9ac could compete with H3K9me and prevent gene silencing. H3K9ac is restricted to euchromatin. Post-translationally, methylated to form mainly H3K4me, H3K9me, H3K18me, H3K23me, H3K27me and H3K36me. H3K4me1/2/3, H3K9me3, H3K27me3 and H3K36me1/2/3 are typical marks for euchromatin, whereas heterochromatic chromocenters are enriched in H3K9me1/2 and H3K27me1/2. H2BK143ub1 is probably prerequisite for H3K4me. Can be phosphorylated to form H3S10ph, H3T11ph and H3S28ph.

The protein resides in the nucleus. The protein localises to the chromosome. Functionally, core component of nucleosome. Nucleosomes wrap and compact DNA into chromatin, limiting DNA accessibility to the cellular machineries which require DNA as a template. Histones thereby play a central role in transcription regulation, DNA repair, DNA replication and chromosomal stability. DNA accessibility is regulated via a complex set of post-translational modifications of histones, also called histone code, and nucleosome remodeling. The sequence is that of Histone H3.2 from Triticum aestivum (Wheat).